The following is a 677-amino-acid chain: Pentatricopeptide repeat-containing protein At5g39350 (677 aa).

16 PPR repeats span residues 48–78, 79–113, 116–146, 151–181, 182–216, 217–251, 252–282, 283–317, 318–352, 353–383, 384–418, 419–453, 454–488, 489–523, 524–554, and 560–590; these read SGHI…MPQS, SLLS…GVKC, DGYT…ILRS, DKYV…MKNR, DVIS…SVDL, DHAT…RLGD, KIEV…MERR, DVIT…GVRP, NAVT…QVYS, DIII…ASKY, HTGP…DVEP, NIAT…GFMS, SLDA…HKSK, DVVL…GVTP, NEIT…MLEH, and RSNH…IPFE. The type E motif stretch occupies residues 595-670; that stretch reads VWGALLAACV…KPGHSTIEIR (76 aa).

Belongs to the PPR family. PCMP-E subfamily.

This is Pentatricopeptide repeat-containing protein At5g39350 (PCMP-E16) from Arabidopsis thaliana (Mouse-ear cress).